The chain runs to 184 residues: ATP-dependent 6-phosphofructokinase (184 aa).

The tract at residues 1 to 184 (GGDGSLTGAN…TRTTVLGHIQ (184 aa)) is N-terminal catalytic PFK domain 1. Residue 2-5 (GDGS) participates in ATP binding. Mg(2+) is bound at residue Asp-3. Substrate contacts are provided by residues 48–50 (SID), Arg-85, 92–94 (MGR), Glu-148, Arg-176, and 182–184 (HIQ). The active-site Proton acceptor is the Asp-50.

It belongs to the phosphofructokinase type A (PFKA) family. ATP-dependent PFK group I subfamily. Eukaryotic two domain clade 'E' sub-subfamily. Homotetramer. The cofactor is Mg(2+).

It localises to the cytoplasm. The catalysed reaction is beta-D-fructose 6-phosphate + ATP = beta-D-fructose 1,6-bisphosphate + ADP + H(+). It functions in the pathway carbohydrate degradation; glycolysis; D-glyceraldehyde 3-phosphate and glycerone phosphate from D-glucose: step 3/4. Allosterically activated by ADP, AMP, or fructose 2,6-bisphosphate, and allosterically inhibited by ATP or citrate. Catalyzes the phosphorylation of D-fructose 6-phosphate to fructose 1,6-bisphosphate by ATP, the first committing step of glycolysis. The chain is ATP-dependent 6-phosphofructokinase (PFK) from Calanus finmarchicus (Calanus tonsus).